Reading from the N-terminus, the 96-residue chain is Large ribosomal subunit protein uL23 (96 aa).

This sequence belongs to the universal ribosomal protein uL23 family. In terms of assembly, part of the 50S ribosomal subunit. Contacts protein L29, and trigger factor when it is bound to the ribosome.

In terms of biological role, one of the early assembly proteins it binds 23S rRNA. One of the proteins that surrounds the polypeptide exit tunnel on the outside of the ribosome. Forms the main docking site for trigger factor binding to the ribosome. The chain is Large ribosomal subunit protein uL23 from Caldicellulosiruptor saccharolyticus (strain ATCC 43494 / DSM 8903 / Tp8T 6331).